A 429-amino-acid chain; its full sequence is Glucose-1-phosphate adenylyltransferase (429 aa).

Alpha-D-glucose 1-phosphate contacts are provided by residues G162, 177–178 (EK), and S209.

Belongs to the bacterial/plant glucose-1-phosphate adenylyltransferase family. Homotetramer.

It carries out the reaction alpha-D-glucose 1-phosphate + ATP + H(+) = ADP-alpha-D-glucose + diphosphate. The protein operates within glycan biosynthesis; glycogen biosynthesis. Its function is as follows. Involved in the biosynthesis of ADP-glucose, a building block required for the elongation reactions to produce glycogen. Catalyzes the reaction between ATP and alpha-D-glucose 1-phosphate (G1P) to produce pyrophosphate and ADP-Glc. This chain is Glucose-1-phosphate adenylyltransferase, found in Trichormus variabilis (strain ATCC 29413 / PCC 7937) (Anabaena variabilis).